The chain runs to 54 residues: Large ribosomal subunit protein bL33 (54 aa).

Belongs to the bacterial ribosomal protein bL33 family.

The polypeptide is Large ribosomal subunit protein bL33 (Corynebacterium urealyticum (strain ATCC 43042 / DSM 7109)).